The sequence spans 125 residues: 13 kDa ribonucleoprotein-associated protein (125 aa).

This sequence belongs to the eukaryotic ribosomal protein eL8 family. Component of the U3 snoRNP particle. Binds to the C'/D and B/C motifs in U3 snoRNA. Component of the 25S U4/U6.U5 tri-snRNP particle, a subcomplex of the spliceosome. Binds to the 5' stem-loop of U4 snRNA.

The protein resides in the nucleus. It is found in the nucleolus. Its function is as follows. Common component of the spliceosome and rRNA processing machinery. In association with the spliceosomal U4/U6.U5 tri-snRNP particle, required for splicing of pre-mRNA. In association with box C/D snoRNPs, required for processing of pre-ribosomal RNA (rRNA) and site-specific 2'-O-methylation of substrate RNAs. Essential for the accumulation and stability of U4 snRNA, U6 snRNA, and box C/D snoRNAs. This is 13 kDa ribonucleoprotein-associated protein (snu13) from Schizosaccharomyces pombe (strain 972 / ATCC 24843) (Fission yeast).